The chain runs to 462 residues: MSLSLWQQCLARLQDELPATEFSMWIRPLQAELSGNTLALYAPNRFVLDWVREKYINNINGLLNDFCGAEVPLLRFEVGNKPVSQNDSPPQRVVTHTPVAPAPQNTSVRPSWDNTAVQPELSYRSNVNPKHTFDNFVEGKSNQLARAAARQVADNPGGAYNPLFLYGGTGLGKTHLLHAVGNSIMARKANAKVVYMHSERFVQDMVKALQNNAIEEFKRYYRSVDALLIDDIQFFANKERSQEEFFHTFNALLEGNQQIILTSDRYPKEINGVEDRLKSRFGWGLTVAIEPPELETRVAILMKKADENEIQLPGEVAFFIAKRLRSNVRELEGALNRVIANANFTGRAITIDFVREALRDLLALQEKLVTIDNIQKTVAEYYKIKVADLLSKRRSRSVARPRQMAMALAKELTNHSLPEIGDAFGGRDHTTVLHACRKIEQLREESHDIKEDFSNLIRTLSS.

Residues 1-86 (MSLSLWQQCL…EVGNKPVSQN (86 aa)) are domain I, interacts with DnaA modulators. Positions 86–125 (NDSPPQRVVTHTPVAPAPQNTSVRPSWDNTAVQPELSYRS) are domain II. The domain III, AAA+ region stretch occupies residues 126–342 (NVNPKHTFDN…GALNRVIANA (217 aa)). The ATP site is built by glycine 170, glycine 172, lysine 173, and threonine 174. The interval 343 to 462 (NFTGRAITID…FSNLIRTLSS (120 aa)) is domain IV, binds dsDNA.

This sequence belongs to the DnaA family. As to quaternary structure, oligomerizes as a right-handed, spiral filament on DNA at oriC.

The protein localises to the cytoplasm. Its function is as follows. Plays an essential role in the initiation and regulation of chromosomal replication. ATP-DnaA binds to the origin of replication (oriC) to initiate formation of the DNA replication initiation complex once per cell cycle. Binds the DnaA box (a 9 base pair repeat at the origin) and separates the double-stranded (ds)DNA. Forms a right-handed helical filament on oriC DNA; dsDNA binds to the exterior of the filament while single-stranded (ss)DNA is stabiized in the filament's interior. The ATP-DnaA-oriC complex binds and stabilizes one strand of the AT-rich DNA unwinding element (DUE), permitting loading of DNA polymerase. After initiation quickly degrades to an ADP-DnaA complex that is not apt for DNA replication. Binds acidic phospholipids. The sequence is that of Chromosomal replication initiator protein DnaA from Photorhabdus laumondii subsp. laumondii (strain DSM 15139 / CIP 105565 / TT01) (Photorhabdus luminescens subsp. laumondii).